The primary structure comprises 88 residues: MISKEQKQKIITEFGKNPNDTGSVEVQIALITDRIRYLTEHLKSNKKDHSSKRGLLKLVGQRRSLLRYYQKKNLEAYRTLIAKLGLRK.

This sequence belongs to the universal ribosomal protein uS15 family. Part of the 30S ribosomal subunit. Forms a bridge to the 50S subunit in the 70S ribosome, contacting the 23S rRNA.

Functionally, one of the primary rRNA binding proteins, it binds directly to 16S rRNA where it helps nucleate assembly of the platform of the 30S subunit by binding and bridging several RNA helices of the 16S rRNA. Forms an intersubunit bridge (bridge B4) with the 23S rRNA of the 50S subunit in the ribosome. The protein is Small ribosomal subunit protein uS15 of Borrelia hermsii (strain HS1 / DAH).